Consider the following 348-residue polypeptide: Flagellar P-ring protein (348 aa).

A signal peptide spans 1–16 (MRVLTIFLLFMTSIFA).

It belongs to the FlgI family. As to quaternary structure, the basal body constitutes a major portion of the flagellar organelle and consists of four rings (L,P,S, and M) mounted on a central rod.

The protein resides in the periplasm. Its subcellular location is the bacterial flagellum basal body. Functionally, assembles around the rod to form the L-ring and probably protects the motor/basal body from shearing forces during rotation. This is Flagellar P-ring protein from Campylobacter jejuni subsp. jejuni serotype O:6 (strain 81116 / NCTC 11828).